Consider the following 62-residue polypeptide: Alpha-conotoxin-like S1.1 (62 aa).

A signal peptide spans 1 to 21 (MGMRMMFTVFLLVVLAITVVS). Positions 22 to 48 (FPLDRESDGANAEARTHDHEKHALDRN) are excised as a propeptide. Disulfide bonds link cysteine 50–cysteine 56 and cysteine 51–cysteine 61. At cysteine 61 the chain carries Cysteine amide.

The protein belongs to the conotoxin A superfamily. In terms of tissue distribution, expressed by the venom duct.

The protein localises to the secreted. Alpha-conotoxins act on postsynaptic membranes, they bind to the nicotinic acetylcholine receptors (nAChR) and thus inhibit them. In Conus striatus (Striated cone), this protein is Alpha-conotoxin-like S1.1.